We begin with the raw amino-acid sequence, 603 residues long: Chaperone protein DnaK (603 aa).

Threonine 175 carries the post-translational modification Phosphothreonine; by autocatalysis. Low complexity predominate over residues 573–586 (AQQAQQQNPDNQNN). The disordered stretch occupies residues 573-603 (AQQAQQQNPDNQNNNKDDVTEATVTDDSTKK). Residues 594-603 (ATVTDDSTKK) show a composition bias toward polar residues.

The protein belongs to the heat shock protein 70 family.

Functionally, acts as a chaperone. The chain is Chaperone protein DnaK from Ureaplasma parvum serovar 3 (strain ATCC 27815 / 27 / NCTC 11736).